Here is a 274-residue protein sequence, read N- to C-terminus: MLNVQLKIFCHAALIFLEVVYLFEPNLIYGVKKREKKSRSDSINHIIIKIKNGDIELKEKFIKKYKPYLLKIISSTLGRYVDPEVSEEYSVGLMAFNEAIDGFNPEINGNFTNYCNMVVNHRIIDYIRKNKKYSNVIPFSYFEERNDFEEKYLVSDSHYLYENIEVKEEILQFEQQLKQFGITLEDLVMNSPKHKDSRELCISIARILSENDKLFEKMIRKKCIPLSELMGLVNVHRKTVERNRKFIIAVSLILRSGLDEIKQFFRASEERREK.

A Polymerase core binding motif is present at residues 87 to 100; sequence EEYSVGLMAFNEAI. Positions 226–245 form a DNA-binding region, H-T-H motif; the sequence is LSELMGLVNVHRKTVERNRK.

Belongs to the sigma-70 factor family. SigI subfamily. Interacts with RsgI4.

Its subcellular location is the cytoplasm. With respect to regulation, negatively regulated by the anti-sigma-I factor RsgI4. Binding of the polysaccharide substrate to RsgI4 may lead to the release and activation of SigI4. Functionally, sigma factors are initiation factors that promote the attachment of RNA polymerase to specific initiation sites and are then released. This sigma factor is involved in regulation of cellulosomal genes via an external polysaccharide-sensing mechanism. This is RNA polymerase sigma factor SigI4 from Acetivibrio thermocellus (strain ATCC 27405 / DSM 1237 / JCM 9322 / NBRC 103400 / NCIMB 10682 / NRRL B-4536 / VPI 7372) (Clostridium thermocellum).